We begin with the raw amino-acid sequence, 169 residues long: Small ribosomal subunit protein uS13m (169 aa).

The disordered stretch occupies residues 149 to 169 (KKLQEKKNKEQKKSQKCKTKK). Over residues 150 to 161 (KLQEKKNKEQKK) the composition is skewed to basic and acidic residues.

This sequence belongs to the universal ribosomal protein uS13 family. In terms of assembly, part of the small ribosomal subunit.

It localises to the mitochondrion. Functionally, located at the top of the head of the small subunit, it contacts several helices of the small subunit rRNA. This chain is Small ribosomal subunit protein uS13m (mrps13), found in Dictyostelium discoideum (Social amoeba).